Reading from the N-terminus, the 963-residue chain is Glycine dehydrogenase (decarboxylating) (963 aa).

Position 707 is an N6-(pyridoxal phosphate)lysine (lysine 707).

It belongs to the GcvP family. As to quaternary structure, the glycine cleavage system is composed of four proteins: P, T, L and H. Requires pyridoxal 5'-phosphate as cofactor.

It catalyses the reaction N(6)-[(R)-lipoyl]-L-lysyl-[glycine-cleavage complex H protein] + glycine + H(+) = N(6)-[(R)-S(8)-aminomethyldihydrolipoyl]-L-lysyl-[glycine-cleavage complex H protein] + CO2. Functionally, the glycine cleavage system catalyzes the degradation of glycine. The P protein binds the alpha-amino group of glycine through its pyridoxal phosphate cofactor; CO(2) is released and the remaining methylamine moiety is then transferred to the lipoamide cofactor of the H protein. The sequence is that of Glycine dehydrogenase (decarboxylating) from Dechloromonas aromatica (strain RCB).